The primary structure comprises 92 residues: Small ribosomal subunit protein uS19 (92 aa).

This sequence belongs to the universal ribosomal protein uS19 family.

In terms of biological role, protein S19 forms a complex with S13 that binds strongly to the 16S ribosomal RNA. The sequence is that of Small ribosomal subunit protein uS19 from Paracoccus denitrificans (strain Pd 1222).